Consider the following 152-residue polypeptide: MSEKYVVTWDMFQMHSRKLAERLLPASQWKGIIAVSRGGLFPAAVLSRELGIRHVETVCIASYDHDRQGELRVIHAAETDGEGFIVVDDLVDTGNTAKEIRNMYPKAKFVTVFAKPAGAPLVDDYVIDIPQDTWIEQPWDLGLGFVPPIARK.

5-phospho-alpha-D-ribose 1-diphosphate-binding positions include 37-38 and 88-96; these read RG and DDLVDTGNT. Mg(2+) is bound at residue D89. The guanine site is built by D92 and I135. 2 residues coordinate xanthine: D92 and I135. Residues 92–96 and 134–135 contribute to the GMP site; these read DTGNT and WI.

The protein belongs to the purine/pyrimidine phosphoribosyltransferase family. XGPT subfamily. In terms of assembly, homotetramer. The cofactor is Mg(2+).

It localises to the cell inner membrane. It catalyses the reaction GMP + diphosphate = guanine + 5-phospho-alpha-D-ribose 1-diphosphate. It carries out the reaction XMP + diphosphate = xanthine + 5-phospho-alpha-D-ribose 1-diphosphate. The catalysed reaction is IMP + diphosphate = hypoxanthine + 5-phospho-alpha-D-ribose 1-diphosphate. Its pathway is purine metabolism; GMP biosynthesis via salvage pathway; GMP from guanine: step 1/1. It participates in purine metabolism; XMP biosynthesis via salvage pathway; XMP from xanthine: step 1/1. Its function is as follows. Purine salvage pathway enzyme that catalyzes the transfer of the ribosyl-5-phosphate group from 5-phospho-alpha-D-ribose 1-diphosphate (PRPP) to the N9 position of the 6-oxopurines guanine and xanthine to form the corresponding ribonucleotides GMP (guanosine 5'-monophosphate) and XMP (xanthosine 5'-monophosphate), with the release of PPi. To a lesser extent, also acts on hypoxanthine. The polypeptide is Xanthine-guanine phosphoribosyltransferase (Actinobacillus succinogenes (strain ATCC 55618 / DSM 22257 / CCUG 43843 / 130Z)).